The primary structure comprises 338 residues: Methionine synthase (338 aa).

Zn(2+) is bound by residues H211, C213, and C294.

It belongs to the archaeal MetE family. It depends on Zn(2+) as a cofactor.

Its pathway is amino-acid biosynthesis; L-methionine biosynthesis via de novo pathway. In terms of biological role, catalyzes the transfer of a methyl group to L-homocysteine resulting in methionine formation. The physiological methyl donor is unknown. The sequence is that of Methionine synthase from Sulfurisphaera tokodaii (strain DSM 16993 / JCM 10545 / NBRC 100140 / 7) (Sulfolobus tokodaii).